The sequence spans 61 residues: Large ribosomal subunit protein uL30 (61 aa).

Belongs to the universal ribosomal protein uL30 family. In terms of assembly, part of the 50S ribosomal subunit.

This Chlorobium limicola (strain DSM 245 / NBRC 103803 / 6330) protein is Large ribosomal subunit protein uL30.